Consider the following 67-residue polypeptide: Large ribosomal subunit protein bL32 (67 aa).

Positions Met-1 to Trp-20 are enriched in basic residues. Residues Met-1–Ala-24 form a disordered region.

The protein belongs to the bacterial ribosomal protein bL32 family.

The protein is Large ribosomal subunit protein bL32 of Renibacterium salmoninarum (strain ATCC 33209 / DSM 20767 / JCM 11484 / NBRC 15589 / NCIMB 2235).